The primary structure comprises 271 residues: Extracellular metalloprotease TRV_06892 (271 aa).

A signal peptide spans 1–19; sequence MRFSVLLTGLAAAGSIATA. N-linked (GlcNAc...) asparagine glycosylation is present at Asn136. Position 185 (His185) interacts with Zn(2+). The active site involves Glu186. His189 lines the Zn(2+) pocket. The N-linked (GlcNAc...) asparagine glycan is linked to Asn200. A disulfide bridge links Cys222 with Cys248.

This sequence belongs to the peptidase M43B family.

It localises to the secreted. In terms of biological role, secreted metalloproteinase that allows assimilation of proteinaceous substrates. Plays a pivotal role as a pathogenicity determinant during infections and contributes to the ability of the pathogen to persist within the mammalian host. This chain is Extracellular metalloprotease TRV_06892, found in Trichophyton verrucosum (strain HKI 0517).